A 365-amino-acid polypeptide reads, in one-letter code: DNA polymerase IV (365 aa).

Positions Ile14–Gly198 constitute a UmuC domain. Asp18 and Asp116 together coordinate Mg(2+). Residue Glu117 is part of the active site.

Belongs to the DNA polymerase type-Y family. Monomer. Mg(2+) serves as cofactor.

Its subcellular location is the cytoplasm. It carries out the reaction DNA(n) + a 2'-deoxyribonucleoside 5'-triphosphate = DNA(n+1) + diphosphate. Its function is as follows. Poorly processive, error-prone DNA polymerase involved in untargeted mutagenesis. Copies undamaged DNA at stalled replication forks, which arise in vivo from mismatched or misaligned primer ends. These misaligned primers can be extended by PolIV. Exhibits no 3'-5' exonuclease (proofreading) activity. May be involved in translesional synthesis, in conjunction with the beta clamp from PolIII. This chain is DNA polymerase IV, found in Streptococcus pyogenes serotype M3 (strain ATCC BAA-595 / MGAS315).